A 439-amino-acid polypeptide reads, in one-letter code: Tol-Pal system protein TolB (439 aa).

An N-terminal signal peptide occupies residues 1-22; that stretch reads MTKFPRWLAMLVGLLFPLSALT.

This sequence belongs to the TolB family. The Tol-Pal system is composed of five core proteins: the inner membrane proteins TolA, TolQ and TolR, the periplasmic protein TolB and the outer membrane protein Pal. They form a network linking the inner and outer membranes and the peptidoglycan layer.

The protein localises to the periplasm. Functionally, part of the Tol-Pal system, which plays a role in outer membrane invagination during cell division and is important for maintaining outer membrane integrity. This chain is Tol-Pal system protein TolB, found in Xylella fastidiosa (strain Temecula1 / ATCC 700964).